The following is a 351-amino-acid chain: Protein Tex24 (351 aa).

3 disordered regions span residues 69-101 (PSTA…PSLS), 117-144 (PEDR…AQGK), and 275-298 (EKVK…PKSM). The span at 73–83 (HGKRKPGHLPR) shows a compositional bias: basic residues. Basic and acidic residues predominate over residues 275–285 (EKVKPSSHDMH).

Specific to testis, where it is expressed in spermatogonia.

The protein localises to the nucleus. Functionally, nuclear factor which might have a role in spermatogenesis. The polypeptide is Protein Tex24 (Mus musculus (Mouse)).